Reading from the N-terminus, the 96-residue chain is Probable quinol oxidase subunit 4 (96 aa).

A run of 3 helical transmembrane segments spans residues 8 to 28 (TVGF…TLYT), 36 to 56 (ITII…MFMH), and 68 to 88 (FKVL…YWVM).

It belongs to the cytochrome c oxidase bacterial subunit 4 family.

The protein resides in the cell membrane. The enzyme catalyses 2 a quinol + O2 = 2 a quinone + 2 H2O. Functionally, catalyzes quinol oxidation with the concomitant reduction of oxygen to water. The protein is Probable quinol oxidase subunit 4 (qoxD) of Staphylococcus saprophyticus subsp. saprophyticus (strain ATCC 15305 / DSM 20229 / NCIMB 8711 / NCTC 7292 / S-41).